A 1360-amino-acid polypeptide reads, in one-letter code: KN motif and ankyrin repeat domains 1 (1360 aa).

Residues 30–68 (PYFVETPYGFQLDLDFVKYVDDIQKGNTIKKLNIQKRRK) form a KN motif; Interaction with TLN1 region. An Important for binding to TLN1 motif is present at residues 41-44 (LDLD). The Nuclear export signal 1 (NES 1) motif lies at 43-52 (LDFVKYVDDI). The short motif at 65–68 (KRRK) is the Nuclear localization signal 1 (NLS 1) element. Residues 66 to 103 (RRKPSVPCPEVRAIPGHQGVWTSTESLSSSNSDDSKQC) form a disordered region. Residues 88 to 103 (STESLSSSNSDDSKQC) show a composition bias toward low complexity. Residues 125-134 (LETSPTFAVS) carry the Nuclear export signal 2 (NES 2) motif. S186 is modified (phosphoserine). Residues 221–253 (DYNSYVPAAPTTSSMGSSVRHSPLSSGISTPVT) are disordered. Residues 230–253 (PTTSSMGSSVRHSPLSSGISTPVT) show a composition bias toward polar residues. Residues 244–339 (LSSGISTPVT…SQLELLARAR (96 aa)) are interaction with PPFIBP1. Residues 260-311 (LQHIREQMAIALKRLKELEEQVRTIPVLQVKISVLQEEKRQLASQLKSQRAS) adopt a coiled-coil conformation. Position 325 is a phosphoserine (S325). Coiled-coil stretches lie at residues 367 to 394 (FRQLTADMQALERKIQDSSCEVASELRE) and 453 to 487 (ITEADKEIELQQQTIEALKEKIYRLEVQLKETTHD). The short motif at 618-627 (LTLLKTNLNL) is the Nuclear export signal 3 (NES 3) element. Disordered stretches follow at residues 929–954 (SQPEVEAETAEGKHSRGHEQFPMQGS) and 983–1053 (IMKK…DTRG). Composition is skewed to basic and acidic residues over residues 938-947 (AEGKHSRGHE) and 985-995 (KKSDGNKDSNG). The Nuclear localization signal 2 (NLS 2) signature appears at 985–998 (KKSDGNKDSNGAKK). Residues 1010–1025 (ETTSSDESSSDGSSSS) show a composition bias toward low complexity. Residues 1026 to 1047 (ESDDECDTIGYPPEEEEEEEEK) are compositionally biased toward acidic residues. Positions 1081-1360 (EPEKEEIRER…PGPTHRGSFD (280 aa)) are interaction with KIF21A. An ANK 0; degenerate repeat occupies 1117–1154 (KDMRICLNTLQHDWFRVSSQKSAVPAMVGDYIAAFEAV). 5 ANK repeats span residues 1169–1199 (NGNTALHYSVSHSNFQIVKLLLDADVCNVDH), 1203–1236 (AGYTPIMLAALAAVEAEKDMQVVEELFSCGDVNA), 1241–1270 (AGQTALMLAVSHGRIDMVKGLLACGADVNI), 1274–1306 (EGSTALMCASEHGHVEIVKLLLAQPGCNGHLED), and 1308–1337 (DGSTALSIALEAGHKDIAVLLYAHLNFSKA). A disordered region spans residues 1337–1360 (AQSPSTPRLGRKTSPGPTHRGSFD).

Part of a cortical microtubule stabilization complex (CMSC) composed of KANK1, PPFIA1, PPFIBP1, ERC1/ELKS, PHLDB2/LL5beta, CLASPs, KIF21A and possibly additional interactors; within CMSCs KANK1 and PHLDB2/LL5beta appear to be the core components for targeting of microtubule-binding proteins KIF21A and CLASPs, whereas PPFIA1, PPFIBP1 and ERC1/ELKS serve as scaffolds for protein clustering. Interacts (via KN motif) with TLN1 (via R7 domain); this mediates CMSC clustering around focal adhesions. Interacts (via CC1 domain, residues 244-339) with PPFIBP1. Interacts (via ANK repeats 1-5) with KIF21A (via residues 1142-1169). Interacts with YWHAQ; the interaction requires KANK1 phosphorylation at Ser-325 and is enhanced by growth factor stimulation. Interacts with YWHAB, YWHAG, YWHAE, YWHAH, YWHAZ and SFN; the interaction requires KANK1 phosphorylation at Ser-325. Interacts with ARFGEF1; however, colocalization cannot be experimentally confirmed. Interacts with BAIAP2. Interacts with CTNNB1. Interacts (via coiled coil domain) with DAAM1 (via coiled coil domain).

Its subcellular location is the cytoplasm. It localises to the cell cortex. The protein resides in the cell projection. The protein localises to the ruffle membrane. It is found in the nucleus. Its function is as follows. Adapter protein that links structural and signaling protein complexes positioned to guide microtubule and actin cytoskeleton dynamics during cell morphogenesis. At focal adhesions (FAs) rims, organizes cortical microtubule stabilizing complexes (CMSCs) and directly interacts with major FA component TLN1, forming macromolecular assemblies positioned to control microtubule-actin crosstalk at the cell edge. Recruits KIF21A in CMSCs at axonal growth cones and regulates axon guidance by suppressing microtubule growth without inducing microtubule disassembly once it reaches the cell cortex. Interacts with ARFGEF1 and participates in establishing microtubule-organizing center (MTOC) orientation and directed cell movement in wound healing. Regulates actin stress fiber formation and cell migration by inhibiting RHOA activation in response to growth factors; this function involves phosphorylation through PI3K/Akt signaling and may depend on the competitive interaction with 14-3-3 adapter proteins to sequester them from active complexes. Inhibits the formation of lamellipodia but not of filopodia; this function may depend on the competitive interaction with BAIAP2 to block its association with activated RAC1. Inhibits fibronectin-mediated cell spreading; this function is partially mediated by BAIAP2. In the nucleus, is involved in beta-catenin-dependent activation of transcription. During cell division, may regulate DAAM1-dependent RHOA activation that signals centrosome maturation and chromosomal segregation. May also be involved in contractile ring formation during cytokinesis. Potential tumor suppressor for renal cell carcinoma. This Mus musculus (Mouse) protein is KN motif and ankyrin repeat domains 1.